We begin with the raw amino-acid sequence, 179 residues long: ADP-ribosylation factor-like protein 5A (179 aa).

Residue glycine 2 is the site of N-myristoyl glycine attachment. GTP-binding positions include 23-30, 66-70, 125-128, and alanine 159; these read GLDNAGKT, DIGGQ, and NKQD.

It belongs to the small GTPase superfamily. Arf family. Low amounts were found in most tissues examined with highest levels in brain, intestine and thymus.

Lacks ADP-ribosylation enhancing activity. This is ADP-ribosylation factor-like protein 5A (Arl5a) from Rattus norvegicus (Rat).